The primary structure comprises 641 residues: Protein GAMETE EXPRESSED 3 (641 aa).

The N-terminal stretch at 1–29 (MVAFRFVYIPLPFFFFFFFFFVFFSGVSQ) is a signal peptide. The chain crosses the membrane as a helical span at residues 441-461 (IIWFLLFEFVIMVLFAALVRF). The tract at residues 570–627 (ITIFQTPSDESSSEESYRDEHYDDVADDEHDEDDLDRKQKGKLLAHSEGSSNDGDGIA) is disordered. Residues 584-593 (ESYRDEHYDD) are compositionally biased toward basic and acidic residues. Positions 594 to 603 (VADDEHDEDD) are enriched in acidic residues.

As to expression, expressed in mature siliques and in pollen, mainly in the sperm cells. Detected in the egg cell within the female gametophyte.

The protein localises to the cell membrane. Functionally, required for micropylar pollen tube guidance. Plays a role during early embryo patterning. The chain is Protein GAMETE EXPRESSED 3 (GEX3) from Arabidopsis thaliana (Mouse-ear cress).